A 211-amino-acid chain; its full sequence is ATP-dependent dethiobiotin synthetase BioD 2 (211 aa).

ATP is bound at residue 13–18 (DIGKTI). Mg(2+) is bound at residue Thr17. Lys38 is a catalytic residue. Thr42 serves as a coordination point for substrate. Residues Asp50, 115–118 (EGAG), and 175–176 (NT) each bind ATP. Residues Asp50 and Glu115 each coordinate Mg(2+).

It belongs to the dethiobiotin synthetase family. As to quaternary structure, homodimer. Mg(2+) serves as cofactor.

It is found in the cytoplasm. The catalysed reaction is (7R,8S)-7,8-diammoniononanoate + CO2 + ATP = (4R,5S)-dethiobiotin + ADP + phosphate + 3 H(+). It functions in the pathway cofactor biosynthesis; biotin biosynthesis; biotin from 7,8-diaminononanoate: step 1/2. Its function is as follows. Catalyzes a mechanistically unusual reaction, the ATP-dependent insertion of CO2 between the N7 and N8 nitrogen atoms of 7,8-diaminopelargonic acid (DAPA, also called 7,8-diammoniononanoate) to form a ureido ring. The chain is ATP-dependent dethiobiotin synthetase BioD 2 from Haemophilus ducreyi (strain 35000HP / ATCC 700724).